A 315-amino-acid polypeptide reads, in one-letter code: tRNA dimethylallyltransferase (315 aa).

10–17 (GPTASGKS) lines the ATP pocket. 12–17 (TASGKS) contributes to the substrate binding site. The tract at residues 35–38 (DSMQ) is interaction with substrate tRNA.

The protein belongs to the IPP transferase family. In terms of assembly, monomer. Mg(2+) serves as cofactor.

It catalyses the reaction adenosine(37) in tRNA + dimethylallyl diphosphate = N(6)-dimethylallyladenosine(37) in tRNA + diphosphate. Catalyzes the transfer of a dimethylallyl group onto the adenine at position 37 in tRNAs that read codons beginning with uridine, leading to the formation of N6-(dimethylallyl)adenosine (i(6)A). In Thermoanaerobacter pseudethanolicus (strain ATCC 33223 / 39E) (Clostridium thermohydrosulfuricum), this protein is tRNA dimethylallyltransferase.